The sequence spans 152 residues: Protein Smg homolog (152 aa).

Belongs to the Smg family.

The sequence is that of Protein Smg homolog from Bordetella bronchiseptica (strain ATCC BAA-588 / NCTC 13252 / RB50) (Alcaligenes bronchisepticus).